Reading from the N-terminus, the 569-residue chain is Potassium-transporting ATPase potassium-binding subunit (569 aa).

A run of 10 helical transmembrane segments spans residues 3-23, 68-88, 136-156, 179-199, 259-279, 284-304, 384-404, 422-442, 490-510, and 534-554; these read LMEY…SPVL, AASL…VLML, VGLA…AVAV, VLYV…GQGV, LQML…GGAV, HAWT…CSLY, GLYG…LMVG, AMLA…VAAV, IALA…GVAG, and LLLT…ALAL.

The protein belongs to the KdpA family. In terms of assembly, the system is composed of three essential subunits: KdpA, KdpB and KdpC.

It localises to the cell inner membrane. In terms of biological role, part of the high-affinity ATP-driven potassium transport (or Kdp) system, which catalyzes the hydrolysis of ATP coupled with the electrogenic transport of potassium into the cytoplasm. This subunit binds the periplasmic potassium ions and delivers the ions to the membrane domain of KdpB through an intramembrane tunnel. This is Potassium-transporting ATPase potassium-binding subunit from Nitratidesulfovibrio vulgaris (strain ATCC 29579 / DSM 644 / CCUG 34227 / NCIMB 8303 / VKM B-1760 / Hildenborough) (Desulfovibrio vulgaris).